Reading from the N-terminus, the 221-residue chain is Woronin body major protein (221 aa).

A Microbody targeting signal motif is present at residues S219–L221.

It belongs to the eIF-5A family. Hex1 subfamily. As to quaternary structure, forms oligomers. Self-assembles into hexagonal rods.

Its subcellular location is the cell septum. Its function is as follows. Major component of Woronin bodies, fungal-specific organelles that occlude septal pores in order to separate intact from damaged compartments. Hex1 binds directly or indirectly to the Woronin body tether that in turn is anchored at the rim of the septal pore. The chain is Woronin body major protein from Emericella nidulans (strain FGSC A4 / ATCC 38163 / CBS 112.46 / NRRL 194 / M139) (Aspergillus nidulans).